A 270-amino-acid chain; its full sequence is Phosphatidylglycerol--prolipoprotein diacylglyceryl transferase (270 aa).

The next 7 membrane-spanning stretches (helical) occupy residues 10–30 (VAVA…LVGI), 56–76 (LIFW…VLFY), 92–112 (WKGG…AWWF), 120–140 (FFQL…AGRI), 175–195 (SQLY…NLYA), 202–222 (MAVS…VEFV), and 237–257 (VTMG…LIWL). Arg139 provides a ligand contact to a 1,2-diacyl-sn-glycero-3-phospho-(1'-sn-glycerol).

Belongs to the Lgt family.

The protein localises to the cell inner membrane. It catalyses the reaction L-cysteinyl-[prolipoprotein] + a 1,2-diacyl-sn-glycero-3-phospho-(1'-sn-glycerol) = an S-1,2-diacyl-sn-glyceryl-L-cysteinyl-[prolipoprotein] + sn-glycerol 1-phosphate + H(+). Its pathway is protein modification; lipoprotein biosynthesis (diacylglyceryl transfer). Functionally, catalyzes the transfer of the diacylglyceryl group from phosphatidylglycerol to the sulfhydryl group of the N-terminal cysteine of a prolipoprotein, the first step in the formation of mature lipoproteins. The protein is Phosphatidylglycerol--prolipoprotein diacylglyceryl transferase of Pseudomonas syringae pv. tomato (strain ATCC BAA-871 / DC3000).